A 334-amino-acid chain; its full sequence is RNA ligase 2 (334 aa).

Positions 1 to 234 are adenylyltransferase; it reads MFKKYSSLEN…KCKNSKFSEK (234 aa). Positions 34, 35, 36, 40, 55, and 99 each coordinate AMP. Residue Lys-35 is the N6-AMP-lysine intermediate of the active site. Residues Ile-162, Leu-164, Asn-166, Glu-204, and Tyr-206 each coordinate Mg(2+). AMP is bound by residues Lys-225 and Lys-227.

Belongs to the RNA ligase 2 family. It depends on Mg(2+) as a cofactor. Mn(2+) serves as cofactor.

It carries out the reaction ATP + (ribonucleotide)n-3'-hydroxyl + 5'-phospho-(ribonucleotide)m = (ribonucleotide)n+m + AMP + diphosphate.. Its function is as follows. Repairs 3'-OH/5'-PO4 nicks in duplex RNA or RNA:DNA hybrid in which the broken 3'-OH strand is RNA. The nick ligation reaction entails three nucleotidyl transfer steps. In the first step, the RNA ligase reacts with ATP in the absence of nucleic acid to form a covalent ligase-AMP intermediate and release pyrophosphate. In step 2, the ligase-AMP binds to the nicked duplex nucleic acid and transfers the adenylate to the 5'-PO4 terminus to form an adenylylated nicked intermediate. In step 3, the RNA ligase directs the attack of the nick 3'-OH on the 5'-phosphoanhydride linkage, resulting in a repaired 3' - 5' phosphodiester and release of AMP. The chain is RNA ligase 2 (Y10A) from Enterobacteria phage T4 (Bacteriophage T4).